Reading from the N-terminus, the 406-residue chain is Exodeoxyribonuclease 7 large subunit (406 aa).

This sequence belongs to the XseA family. In terms of assembly, heterooligomer composed of large and small subunits.

It is found in the cytoplasm. The catalysed reaction is Exonucleolytic cleavage in either 5'- to 3'- or 3'- to 5'-direction to yield nucleoside 5'-phosphates.. Its function is as follows. Bidirectionally degrades single-stranded DNA into large acid-insoluble oligonucleotides, which are then degraded further into small acid-soluble oligonucleotides. The polypeptide is Exodeoxyribonuclease 7 large subunit (Thermobifida fusca (strain YX)).